Here is a 355-residue protein sequence, read N- to C-terminus: Histidinol-phosphate aminotransferase (355 aa).

N6-(pyridoxal phosphate)lysine is present on Lys214.

The protein belongs to the class-II pyridoxal-phosphate-dependent aminotransferase family. Histidinol-phosphate aminotransferase subfamily. In terms of assembly, homodimer. Requires pyridoxal 5'-phosphate as cofactor.

It catalyses the reaction L-histidinol phosphate + 2-oxoglutarate = 3-(imidazol-4-yl)-2-oxopropyl phosphate + L-glutamate. The protein operates within amino-acid biosynthesis; L-histidine biosynthesis; L-histidine from 5-phospho-alpha-D-ribose 1-diphosphate: step 7/9. This is Histidinol-phosphate aminotransferase (hisC) from Buchnera aphidicola subsp. Schizaphis graminum (strain Sg).